A 188-amino-acid chain; its full sequence is dTTP/UTP pyrophosphatase (188 aa).

The active-site Proton acceptor is the Asp70.

Belongs to the Maf family. YhdE subfamily. A divalent metal cation serves as cofactor.

Its subcellular location is the cytoplasm. It carries out the reaction dTTP + H2O = dTMP + diphosphate + H(+). The catalysed reaction is UTP + H2O = UMP + diphosphate + H(+). Its function is as follows. Nucleoside triphosphate pyrophosphatase that hydrolyzes dTTP and UTP. May have a dual role in cell division arrest and in preventing the incorporation of modified nucleotides into cellular nucleic acids. This chain is dTTP/UTP pyrophosphatase, found in Clostridium botulinum (strain Eklund 17B / Type B).